A 356-amino-acid polypeptide reads, in one-letter code: 3-dehydroquinate synthase (356 aa).

Residues 101–105 (GVIGD), 125–126 (TT), Lys138, and Lys147 each bind NAD(+). Glu180, His243, and His260 together coordinate Zn(2+).

It belongs to the sugar phosphate cyclases superfamily. Dehydroquinate synthase family. Co(2+) is required as a cofactor. Requires Zn(2+) as cofactor. NAD(+) serves as cofactor.

The protein resides in the cytoplasm. It carries out the reaction 7-phospho-2-dehydro-3-deoxy-D-arabino-heptonate = 3-dehydroquinate + phosphate. Its pathway is metabolic intermediate biosynthesis; chorismate biosynthesis; chorismate from D-erythrose 4-phosphate and phosphoenolpyruvate: step 2/7. Catalyzes the conversion of 3-deoxy-D-arabino-heptulosonate 7-phosphate (DAHP) to dehydroquinate (DHQ). This chain is 3-dehydroquinate synthase, found in Alkaliphilus metalliredigens (strain QYMF).